The sequence spans 261 residues: Oligodendrocyte transcription factor 1 (261 aa).

Residues 41-105 (PPISSSSSTS…LRRKINSRER (65 aa)) are disordered. Low complexity predominate over residues 44–56 (SSSSSTSSSSTAS). A bHLH domain is found at 95–154 (QLRRKINSRERKRMQDLNLAMDALREVILPYSAAHCQGAPGRKLSKIATLLLARNYILLL).

In terms of tissue distribution, expressed specifically in the brain, including the corpus callosum, hippocampal and cerebral white matter. Also detected in cells scattered in gray matter, most probably in oligodendrocytes.

The protein localises to the nucleus. In terms of biological role, promotes formation and maturation of oligodendrocytes, especially within the brain. Cooperates with OLIG2 to establish the pMN domain of the embryonic neural tube. The polypeptide is Oligodendrocyte transcription factor 1 (Olig1) (Rattus norvegicus (Rat)).